We begin with the raw amino-acid sequence, 217 residues long: Frizzled-8 (217 aa).

Over 1–26 (AGAAELQPELAVAEHVRYESTGPALC) the chain is Extracellular. The chain crosses the membrane as a helical span at residues 27 to 47 (TVVFLLVYFFGMASSIWWVIL). The Cytoplasmic portion of the chain corresponds to 48-69 (SLTWFLAAGMKWGNEAIAGYAQ). Residues 70–90 (YFHLAAWLLPSVKSIAVLALS) form a helical membrane-spanning segment. Residues 91–113 (SVDGDPVAGICYVGNQSLENLRG) are Extracellular-facing. Residue Asn105 is glycosylated (N-linked (GlcNAc...) asparagine). A helical membrane pass occupies residues 114–134 (FVLAPLVVYLFTGSLFLLAGF). Residues 135–160 (VSLFRIRSVIKQGGTKTDKLEKLMIR) lie on the Cytoplasmic side of the membrane. A helical transmembrane segment spans residues 161–181 (IGIFTVLYTVPATIVIACYIY). The Extracellular segment spans residues 182–209 (EQHNREAWEQAQNCSCPGDPHRPKPDYA). The N-linked (GlcNAc...) asparagine glycan is linked to Asn194. A helical transmembrane segment spans residues 210-217 (VFMLKYFM).

This sequence belongs to the G-protein coupled receptor Fz/Smo family.

Its subcellular location is the membrane. It localises to the cell membrane. Functionally, receptor for Wnt proteins. Most of frizzled receptors are coupled to the beta-catenin canonical signaling pathway, which leads to the activation of disheveled proteins, inhibition of GSK-3 kinase, nuclear accumulation of beta-catenin and activation of Wnt target genes. A second signaling pathway involving PKC and calcium fluxes has been seen for some family members, but it is not yet clear if it represents a distinct pathway or if it can be integrated in the canonical pathway, as PKC seems to be required for Wnt-mediated inactivation of GSK-3 kinase. Both pathways seem to involve interactions with G-proteins. May be involved in transduction and intercellular transmission of polarity information during tissue morphogenesis and/or in differentiated tissues. In Gallus gallus (Chicken), this protein is Frizzled-8 (FZD8).